The primary structure comprises 353 residues: Fe(3+) ions import ATP-binding protein FbpC 1 (353 aa).

In terms of domain architecture, ABC transporter spans 9–239 (VVFRNICKQF…PASAFIADFM (231 aa)). An ATP-binding site is contributed by 41-48 (GPSGCGKT).

The protein belongs to the ABC transporter superfamily. Fe(3+) ion importer (TC 3.A.1.10) family. As to quaternary structure, the complex is composed of two ATP-binding proteins (FbpC), two transmembrane proteins (FbpB) and a solute-binding protein (FbpA).

The protein localises to the cell inner membrane. The catalysed reaction is Fe(3+)(out) + ATP + H2O = Fe(3+)(in) + ADP + phosphate + H(+). Part of the ABC transporter complex FbpABC involved in Fe(3+) ions import. Responsible for energy coupling to the transport system. The chain is Fe(3+) ions import ATP-binding protein FbpC 1 from Rhizobium meliloti (strain 1021) (Ensifer meliloti).